A 246-amino-acid chain; its full sequence is tRNA pseudouridine synthase B (246 aa).

Residue Asp-44 is the Nucleophile of the active site.

This sequence belongs to the pseudouridine synthase TruB family. Type 1 subfamily.

It carries out the reaction uridine(55) in tRNA = pseudouridine(55) in tRNA. Its function is as follows. Responsible for synthesis of pseudouridine from uracil-55 in the psi GC loop of transfer RNAs. The polypeptide is tRNA pseudouridine synthase B (Desulfotalea psychrophila (strain LSv54 / DSM 12343)).